Reading from the N-terminus, the 138-residue chain is Small ribosomal subunit protein bS16 (138 aa).

The disordered stretch occupies residues 92–138 (QAAKREADAKQAAKEAAEAKAAAEAEAKAAAEAESADAGAEEAPAEA). Positions 94–122 (AKREADAKQAAKEAAEAKAAAEAEAKAAA) are enriched in basic and acidic residues.

The protein belongs to the bacterial ribosomal protein bS16 family.

The sequence is that of Small ribosomal subunit protein bS16 from Synechococcus sp. (strain WH7803).